Consider the following 365-residue polypeptide: Saoe class I histocompatibility antigen, C alpha chain (365 aa).

A signal peptide spans 1–24 (MTIMAPRTLLLLLSGALSVTETWA). Residues 25–114 (GSHSMRYFST…LLGYYNQSEA (90 aa)) form an alpha-1 region. Topologically, residues 25–308 (GSHSMRYFST…EPPSQPTIPI (284 aa)) are extracellular. The N-linked (GlcNAc...) asparagine glycan is linked to Asn110. Positions 115–206 (GFHTIQWMYG…ENGKEMLQRA (92 aa)) are alpha-2. Intrachain disulfides connect Cys125/Cys188 and Cys227/Cys283. The tract at residues 207–298 (EPPKTHVTHH…GLPEPFTLRW (92 aa)) is alpha-3. Residues 209–297 (PKTHVTHHPV…EGLPEPFTLR (89 aa)) enclose the Ig-like C1-type domain. Positions 299 to 308 (EPPSQPTIPI) are connecting peptide. The chain crosses the membrane as a helical span at residues 309–332 (MGIVAILAILGAVVTGAVVAAVMW). The Cytoplasmic segment spans residues 333–365 (RKKSSDKKGGSYSQAARSDSAQGSDVSLTACKV). Positions 337–365 (SDKKGGSYSQAARSDSAQGSDVSLTACKV) are disordered. A compositionally biased stretch (polar residues) spans 346-359 (QAARSDSAQGSDVS). Phosphoserine is present on residues Ser356 and Ser359.

This sequence belongs to the MHC class I family. In terms of assembly, heterodimer of an alpha chain and a beta chain (beta-2-microglobulin).

The protein resides in the membrane. Involved in the presentation of foreign antigens to the immune system. In Saguinus oedipus (Cotton-top tamarin), this protein is Saoe class I histocompatibility antigen, C alpha chain.